Consider the following 348-residue polypeptide: Protein RecA (348 aa).

An ATP-binding site is contributed by 69–76 (GPESSGKT).

It belongs to the RecA family.

It localises to the cytoplasm. Its function is as follows. Can catalyze the hydrolysis of ATP in the presence of single-stranded DNA, the ATP-dependent uptake of single-stranded DNA by duplex DNA, and the ATP-dependent hybridization of homologous single-stranded DNAs. It interacts with LexA causing its activation and leading to its autocatalytic cleavage. The chain is Protein RecA from Picosynechococcus sp. (strain ATCC 27264 / PCC 7002 / PR-6) (Agmenellum quadruplicatum).